Reading from the N-terminus, the 660-residue chain is Bifunctional polymyxin resistance protein ArnA (660 aa).

The formyltransferase ArnAFT stretch occupies residues 1 to 304 (MKAVIFAYHD…TLGLVAGARL (304 aa)). His104 functions as the Proton donor; for formyltransferase activity in the catalytic mechanism. Residues Arg114 and 136-140 (VKRAD) contribute to the (6R)-10-formyltetrahydrofolate site. The interval 314–660 (RRIRVLILGV…RSVDIAERAS (347 aa)) is dehydrogenase ArnADH. NAD(+)-binding positions include Asp347 and 368–369 (DI). Residues Ala393, Tyr398, and 432–433 (TS) each bind UDP-alpha-D-glucuronate. The Proton acceptor; for decarboxylase activity role is filled by Glu434. Residues Arg460, Asn492, 526 to 535 (KLIDGGQQKR), and Tyr613 contribute to the UDP-alpha-D-glucuronate site. Catalysis depends on Arg619, which acts as the Proton donor; for decarboxylase activity.

This sequence in the N-terminal section; belongs to the Fmt family. UDP-L-Ara4N formyltransferase subfamily. In the C-terminal section; belongs to the NAD(P)-dependent epimerase/dehydratase family. UDP-glucuronic acid decarboxylase subfamily. As to quaternary structure, homohexamer, formed by a dimer of trimers.

It catalyses the reaction UDP-alpha-D-glucuronate + NAD(+) = UDP-beta-L-threo-pentopyranos-4-ulose + CO2 + NADH. The catalysed reaction is UDP-4-amino-4-deoxy-beta-L-arabinose + (6R)-10-formyltetrahydrofolate = UDP-4-deoxy-4-formamido-beta-L-arabinose + (6S)-5,6,7,8-tetrahydrofolate + H(+). It participates in nucleotide-sugar biosynthesis; UDP-4-deoxy-4-formamido-beta-L-arabinose biosynthesis; UDP-4-deoxy-4-formamido-beta-L-arabinose from UDP-alpha-D-glucuronate: step 1/3. Its pathway is nucleotide-sugar biosynthesis; UDP-4-deoxy-4-formamido-beta-L-arabinose biosynthesis; UDP-4-deoxy-4-formamido-beta-L-arabinose from UDP-alpha-D-glucuronate: step 3/3. The protein operates within bacterial outer membrane biogenesis; lipopolysaccharide biosynthesis. In terms of biological role, bifunctional enzyme that catalyzes the oxidative decarboxylation of UDP-glucuronic acid (UDP-GlcUA) to UDP-4-keto-arabinose (UDP-Ara4O) and the addition of a formyl group to UDP-4-amino-4-deoxy-L-arabinose (UDP-L-Ara4N) to form UDP-L-4-formamido-arabinose (UDP-L-Ara4FN). The modified arabinose is attached to lipid A and is required for resistance to polymyxin and cationic antimicrobial peptides. This is Bifunctional polymyxin resistance protein ArnA from Salmonella schwarzengrund (strain CVM19633).